Reading from the N-terminus, the 469-residue chain is Ribonuclease Y (469 aa).

A helical membrane pass occupies residues 6-26 (VTLILVGVIIFLFISLFFYVI). One can recognise a KH domain in the interval 149–209 (FSFTIKLENE…IRREKAKRTM (61 aa)). An HD domain is found at 276–369 (VLLHCVEAAV…VKVVDKLSAS (94 aa)).

It belongs to the RNase Y family.

It is found in the cell membrane. In terms of biological role, endoribonuclease that initiates mRNA decay. This Malacoplasma penetrans (strain HF-2) (Mycoplasma penetrans) protein is Ribonuclease Y.